Consider the following 347-residue polypeptide: 4-hydroxy-2-oxovalerate aldolase 2 (347 aa).

The 251-residue stretch at 9–259 folds into the Pyruvate carboxyltransferase domain; that stretch reads ITIVDTTLRD…DTGVDLFPLI (251 aa). Substrate is bound by residues 17–18, serine 171, and histidine 198; that span reads RD. Aspartate 18 serves as a coordination point for Mn(2+). Histidine 198 and histidine 200 together coordinate Mn(2+). Tyrosine 289 lines the substrate pocket.

This sequence belongs to the 4-hydroxy-2-oxovalerate aldolase family.

The enzyme catalyses (S)-4-hydroxy-2-oxopentanoate = acetaldehyde + pyruvate. This chain is 4-hydroxy-2-oxovalerate aldolase 2, found in Rhodococcus opacus (strain B4).